A 127-amino-acid chain; its full sequence is uncharacterized protein (127 aa).

Residues 1–24 are disordered; the sequence is PLKTKPIDNNLPHRTGYNQASKQQ.

This is an uncharacterized protein from Homo sapiens (Human).